The sequence spans 454 residues: Protein disulfide-isomerase TMX3 (454 aa).

An N-terminal signal peptide occupies residues 1-24 (MAAWKSWTALRLCATVVVLDMVVC). The Thioredoxin domain maps to 25 to 128 (KGFVEDLDES…KDDIIEFAHR (104 aa)). Residues 25–375 (KGFVEDLDES…TIVSIFKSSP (351 aa)) are Lumenal-facing. Residues Cys53 and Cys56 each act as nucleophile in the active site. A disulfide bond links Cys53 and Cys56. N-linked (GlcNAc...) asparagine glycans are attached at residues Asn258 and Asn313. A helical membrane pass occupies residues 376-396 (LMGCFLFGLPLGVISIMCYGI). Topologically, residues 397–454 (YTADTDGGYIEERYEVSKSENENQEQIEESKEQQEPSSGGSVVPTVQEPKDVLEKKKD) are cytoplasmic. A disordered region spans residues 412–454 (VSKSENENQEQIEESKEQQEPSSGGSVVPTVQEPKDVLEKKKD). A compositionally biased stretch (basic and acidic residues) spans 444–454 (EPKDVLEKKKD). The Di-lysine motif motif lies at 451 to 454 (KKKD).

This sequence belongs to the protein disulfide isomerase family. N-glycosylated. As to expression, widely expressed. Expressed in brain, testis, lung, skin, kidney, uterus, bone, stomach, liver, prostate, placenta, eye and muscle.

It localises to the endoplasmic reticulum membrane. The catalysed reaction is Catalyzes the rearrangement of -S-S- bonds in proteins.. Its function is as follows. Probable disulfide isomerase, which participates in the folding of proteins containing disulfide bonds. May act as a dithiol oxidase. Acts as a regulator of endoplasmic reticulum-mitochondria contact sites via its ability to regulate redox signals. This is Protein disulfide-isomerase TMX3 (TMX3) from Homo sapiens (Human).